A 1472-amino-acid chain; its full sequence is Adhesion G protein-coupled receptor L1 (1472 aa).

The signal sequence occupies residues 1-24 (MARLAAVLWSLCVTAILVTSATQG). The Extracellular segment spans residues 25–857 (LSRAGLPFGL…EIYQGRINEL (833 aa)). The 90-residue stretch at 40-129 (ACEGYPIELR…KYLEVQYDCV (90 aa)) folds into the SUEL-type lectin domain. Cystine bridges form between C41-C71, C50-C128, C83-C115, C96-C102, and C140-C322. E42 provides a ligand contact to alpha-L-rhamnose. An N-linked (GlcNAc...) asparagine glycan is attached at N98. 117–120 (GTYK) contributes to the alpha-L-rhamnose binding site. Residues 139–398 (VCPGTLQKVL…VVRYSLEFGP (260 aa)) enclose the Olfactomedin-like domain. Residues 400-468 (DPSAGPATSP…APAPSTRRPP (69 aa)) are disordered. Residues 405 to 441 (PATSPPLSTTTTARPTPLTSTASPAATTPLRRAPLTT) are compositionally biased toward low complexity. Positions 453–468 (DLPPATAPAPSTRRPP) are enriched in pro residues. Disulfide bonds link C480–C515 and C503–C532. N531, N640, N741, N800, N805, and N826 each carry an N-linked (GlcNAc...) asparagine glycan. In terms of domain architecture, GAIN-B spans 669–850 (PARFLAAKQN…AVLMAHREIY (182 aa)). 2 cysteine pairs are disulfide-bonded: C801-C832 and C820-C834. A GPS region spans residues 801–850 (CSFWNYSERSMLGYWSTQGCRLVESNKTHTTCACSHLTNFAVLMAHREIY). The chain crosses the membrane as a helical span at residues 858–878 (LLSVITWVGIVISLVCLAICI). At 879–892 (STFCFLRGLQTDRN) the chain is on the cytoplasmic side. Residues 893-913 (TIHKNLCINLFLAELLFLVGI) form a helical membrane-spanning segment. Residues 914 to 919 (DKTQYE) lie on the Extracellular side of the membrane. Residues 920–940 (IACPIFAGLLHYFFLAAFSWL) form a helical membrane-spanning segment. Residues 941–963 (CLEGVHLYLLLVEVFESEYSRTK) lie on the Cytoplasmic side of the membrane. The helical transmembrane segment at 964-984 (YYYLGGYCFPALVVGIAAAID) threads the bilayer. Topologically, residues 985 to 1001 (YRSYGTEKACWLRVDNY) are extracellular. The helical transmembrane segment at 1002–1022 (FIWSFIGPVSFVIVVNLVFLM) threads the bilayer. The Cytoplasmic portion of the chain corresponds to 1023-1049 (VTLHKMVRSSSVLKPDSSRLDNIKSWA). A helical membrane pass occupies residues 1050–1070 (LGAIALLFLLGLTWAFGLLFI). Residues 1071 to 1074 (NKES) lie on the Extracellular side of the membrane. The helical transmembrane segment at 1075-1095 (VVMAYLFTTFNAFQGVFIFVF) threads the bilayer. At 1096 to 1472 (HCALQKKVHK…DGQMQLVTSL (377 aa)) the chain is on the cytoplasmic side. Omega-N-methylarginine is present on R1193. A Phosphoserine modification is found at S1219. Disordered regions lie at residues 1247 to 1271 (FNNS…PRGR), 1291 to 1325 (NLRG…GGPG), 1358 to 1427 (ESES…SRPP), and 1449 to 1472 (YLAA…VTSL). Pro residues-rich tracts occupy residues 1301–1313 (GPPP…PPVP) and 1406–1418 (ALPP…PGPP). S1471 is modified (phosphoserine).

It belongs to the G-protein coupled receptor 2 family. Adhesion G-protein coupled receptor (ADGR) subfamily. Forms a heterodimer, consisting of a large extracellular region (p120) non-covalently linked to a seven-transmembrane moiety (p85). Interacts with syntaxin and with proteins of the SHANK family via the PDZ domain. Interacts (via extracellular domain) with FLRT1, FLRT2 and FLRT3 (via extracellular domain). Post-translationally, autoproteolytically cleaved into 2 subunits, an extracellular subunit and a seven-transmembrane subunit. This proteolytic processing takes place early in the biosynthetic pathway, either in the endoplasmic reticulum or in the early compartment of the Golgi apparatus. Brain-specific expression but low levels are also detected in kidney, lung and spleen.

It localises to the cell membrane. It is found in the cell projection. The protein localises to the axon. The protein resides in the growth cone. Its subcellular location is the synapse. It localises to the presynaptic cell membrane. It is found in the synaptosome. Calcium-independent receptor of high affinity for alpha-latrotoxin, an excitatory neurotoxin present in black widow spider venom which triggers massive exocytosis from neurons and neuroendocrine cells. Receptor for TENM2 that mediates heterophilic synaptic cell-cell contact and postsynaptic specialization. Receptor probably implicated in the regulation of exocytosis. The polypeptide is Adhesion G protein-coupled receptor L1 (Bos taurus (Bovine)).